The following is a 101-amino-acid chain: Putative antitoxin HigA2 (101 aa).

Positions 35-90 (LRELRAAQSLTQVQVAALAHIRQSRVSSIENGDIGSAQVNTLRKYVSALGGELDIT) constitute an HTH cro/C1-type domain. The H-T-H motif DNA-binding region spans 46 to 65 (QVQVAALAHIRQSRVSSIEN).

Putative antitoxin component of a type II toxin-antitoxin (TA) system. Its cognate toxin would be HigB2. This chain is Putative antitoxin HigA2, found in Mycobacterium tuberculosis (strain ATCC 25618 / H37Rv).